We begin with the raw amino-acid sequence, 298 residues long: Transcription factor RAX2 (298 aa).

HTH myb-type domains lie at 9-62 (KANV…LNYL) and 63-117 (RPNI…KKKL). DNA-binding regions (H-T-H motif) lie at residues 38–62 (WIALPHKAGLRRCGKSCRLRWLNYL) and 90–113 (WSVIAAHLQGRTDNDIKNYWNTKL).

As to expression, ubiquitous, with higher levels in roots, flowers, and shoot tips. Found in all cells of the shoot tips.

Its subcellular location is the nucleus. Its function is as follows. Transcription activator. Positively regulates axillary meristems (AMs) formation and development, especially during inflorescence. The chain is Transcription factor RAX2 (RAX2) from Arabidopsis thaliana (Mouse-ear cress).